Here is a 526-residue protein sequence, read N- to C-terminus: MSYSQQVNKRRTFAIISHPDAGKTTITEKVLLYGNAIQKAGSVKGKGSQAHAKSDWMEMEKQRGISITTSVMQFPYHDCLVNLLDTPGHEDFSEDTYRTLTAVDSCLMVIDSAKGVEERTIKLMDVTRLRDTPILTFMNKLDRDIRDPMELLDEVESVLKIRCAPITWPIGCGKLFKGVYHLYKDETYLYQSGQGHTIQDVRIVKGLNNADLDRAVGEDLARQLRDELELVKGASNEFDHDLFIRGELTPVFFGTALGNFGVDHFLDGLTQWAPAPQARQADCRLVESAEEKLTGFVFKIQANMDPKHRDRVAFMRIVSGKYEKGMKLKQVRLGKEVVLSDALTFMAGDRSHAEEAYAGDIIGLHNHGTIQIGDTFTQGEDLKFTGIPNFAPELFRRIRLKDPLKQKQLLKGLVQLSEEGAVQVFRPLTNNDLIVGAVGVLQFDVVVSRLKSEYNVEAVYETVNVATARWVECSEAKKLEEFKRKNEQNLALDGGDSLTYIAPTMVNLNLTQERYPDIQFFKTREH.

Residues 8–277 form the tr-type G domain; it reads NKRRTFAIIS…GLTQWAPAPQ (270 aa). GTP is bound by residues 17-24, 85-89, and 139-142; these read SHPDAGKT, DTPGH, and NKLD.

It belongs to the TRAFAC class translation factor GTPase superfamily. Classic translation factor GTPase family. PrfC subfamily.

It is found in the cytoplasm. Increases the formation of ribosomal termination complexes and stimulates activities of RF-1 and RF-2. It binds guanine nucleotides and has strong preference for UGA stop codons. It may interact directly with the ribosome. The stimulation of RF-1 and RF-2 is significantly reduced by GTP and GDP, but not by GMP. In Histophilus somni (strain 2336) (Haemophilus somnus), this protein is Peptide chain release factor 3.